A 343-amino-acid polypeptide reads, in one-letter code: GTPase Obg (343 aa).

One can recognise an Obg domain in the interval 1-159 (MKYIDEVKIQ…FELKLELRVL (159 aa)). The OBG-type G domain maps to 160–334 (ADVGLLGLPN…LTYAIMGYLE (175 aa)). Residues 166–173 (GLPNAGKS), 191–195 (FTTLY), 213–216 (DIPG), 284–287 (NKVD), and 315–317 (SAL) contribute to the GTP site. Positions 173 and 193 each coordinate Mg(2+).

This sequence belongs to the TRAFAC class OBG-HflX-like GTPase superfamily. OBG GTPase family. As to quaternary structure, monomer. Mg(2+) serves as cofactor.

Its subcellular location is the cytoplasm. Its function is as follows. An essential GTPase which binds GTP, GDP and possibly (p)ppGpp with moderate affinity, with high nucleotide exchange rates and a fairly low GTP hydrolysis rate. Plays a role in control of the cell cycle, stress response, ribosome biogenesis and in those bacteria that undergo differentiation, in morphogenesis control. This chain is GTPase Obg, found in Nitrosomonas eutropha (strain DSM 101675 / C91 / Nm57).